The sequence spans 437 residues: 2-methylisoborneol synthase (437 aa).

The disordered stretch occupies residues 32 to 125 (AHDSEATVGG…IPGLYHHPVP (94 aa)). The segment covering 59-73 (PPSPAAPPTDVPAPE) has biased composition (pro residues). The Mg(2+) site is built by Asp194, Asp195, Glu199, Asn342, Ser346, and Glu350.

It belongs to the terpene synthase family. 2-methylisoborneol synthase subfamily. It depends on Mg(2+) as a cofactor.

It carries out the reaction (E)-2-methylgeranyl diphosphate + H2O = 2-methylisoborneol + diphosphate. Functionally, catalyzes the cyclization of 2-methylgeranyl diphosphate (2-MeGPP) to 2-methylisoborneol (2-MIB), which likely involves the intermediacy of 2-methyllinalyl diphosphate. This Streptomyces griseus protein is 2-methylisoborneol synthase.